We begin with the raw amino-acid sequence, 128 residues long: Probable 4-amino-4-deoxy-L-arabinose-phosphoundecaprenol flippase subunit ArnF (128 aa).

Residues 1-2 are Cytoplasmic-facing; it reads MG. Residues 3–23 traverse the membrane as a helical segment; the sequence is LMWGLFSVIIASAAQLSLGFA. Residues 24-35 lie on the Periplasmic side of the membrane; sequence ASHLPPMTHLWD. A helical transmembrane segment spans residues 36–56; that stretch reads FIAALLAFGLDARILLLGLLG. The Cytoplasmic segment spans residues 57–76; the sequence is YLLSVFCWYKTLHKLALSKA. The chain crosses the membrane as a helical span at residues 77 to 97; it reads YALLSMSYVLVWIASMILPGW. The Periplasmic portion of the chain corresponds to 98-100; the sequence is EGT. A helical membrane pass occupies residues 101–121; that stretch reads FSLKALLGVACIMSGLMLIFL. At 122-128 the chain is on the cytoplasmic side; that stretch reads PTTKQRY.

It belongs to the ArnF family. Heterodimer of ArnE and ArnF.

It localises to the cell inner membrane. Its pathway is bacterial outer membrane biogenesis; lipopolysaccharide biosynthesis. Functionally, translocates 4-amino-4-deoxy-L-arabinose-phosphoundecaprenol (alpha-L-Ara4N-phosphoundecaprenol) from the cytoplasmic to the periplasmic side of the inner membrane. The protein is Probable 4-amino-4-deoxy-L-arabinose-phosphoundecaprenol flippase subunit ArnF of Escherichia coli O17:K52:H18 (strain UMN026 / ExPEC).